A 234-amino-acid polypeptide reads, in one-letter code: Phosphoribosylaminoimidazole-succinocarboxamide synthase (234 aa).

Belongs to the SAICAR synthetase family.

The catalysed reaction is 5-amino-1-(5-phospho-D-ribosyl)imidazole-4-carboxylate + L-aspartate + ATP = (2S)-2-[5-amino-1-(5-phospho-beta-D-ribosyl)imidazole-4-carboxamido]succinate + ADP + phosphate + 2 H(+). It functions in the pathway purine metabolism; IMP biosynthesis via de novo pathway; 5-amino-1-(5-phospho-D-ribosyl)imidazole-4-carboxamide from 5-amino-1-(5-phospho-D-ribosyl)imidazole-4-carboxylate: step 1/2. The protein is Phosphoribosylaminoimidazole-succinocarboxamide synthase of Clostridium botulinum (strain ATCC 19397 / Type A).